The chain runs to 159 residues: Pathogenesis-related leaf protein 4 (159 aa).

An N-terminal signal peptide occupies residues 1-24 (MGLFNISLLLTCLMVLAIFHSCEA). Gln-25 bears the Pyrrolidone carboxylic acid mark. Positions 32 to 147 (LAVHNDARAQ…NGWWFISCNY (116 aa)) constitute an SCP domain. 3 cysteine pairs are disulfide-bonded: Cys-68/Cys-136, Cys-109/Cys-115, and Cys-131/Cys-145.

This sequence belongs to the CRISP family.

Functionally, probably involved in the defense reaction of plants against pathogens. This chain is Pathogenesis-related leaf protein 4, found in Solanum lycopersicum (Tomato).